Consider the following 268-residue polypeptide: Indole-3-glycerol phosphate synthase (268 aa).

The protein belongs to the TrpC family.

The catalysed reaction is 1-(2-carboxyphenylamino)-1-deoxy-D-ribulose 5-phosphate + H(+) = (1S,2R)-1-C-(indol-3-yl)glycerol 3-phosphate + CO2 + H2O. The protein operates within amino-acid biosynthesis; L-tryptophan biosynthesis; L-tryptophan from chorismate: step 4/5. This Micrococcus luteus (strain ATCC 4698 / DSM 20030 / JCM 1464 / CCM 169 / CCUG 5858 / IAM 1056 / NBRC 3333 / NCIMB 9278 / NCTC 2665 / VKM Ac-2230) (Micrococcus lysodeikticus) protein is Indole-3-glycerol phosphate synthase.